The sequence spans 548 residues: Phosphoglucomutase (548 aa).

The active-site Phosphoserine intermediate is Ser-135. Ser-135, Asp-288, Asp-290, and Asp-292 together coordinate Mg(2+).

It belongs to the phosphohexose mutase family. Mg(2+) serves as cofactor.

It catalyses the reaction alpha-D-glucose 1-phosphate = alpha-D-glucose 6-phosphate. It functions in the pathway glycolipid metabolism; diglucosyl-diacylglycerol biosynthesis. Its function is as follows. Catalyzes the interconversion between glucose-6-phosphate and alpha-glucose-1-phosphate. This is the first step in the biosynthesis of diglucosyl-diacylglycerol (Glc2-DAG), i.e. a glycolipid found in the membrane, which is also used as a membrane anchor for lipoteichoic acid (LTA). The chain is Phosphoglucomutase (pgcA) from Staphylococcus haemolyticus (strain JCSC1435).